Reading from the N-terminus, the 502-residue chain is Protein DETOXIFICATION 55 (502 aa).

12 helical membrane-spanning segments follow: residues 30–50 (IWDI…KNMT), 61–81 (LELA…YSVL), 112–132 (IFLL…LAPL), 145–165 (VASL…FLHP), 185–205 (VSVL…SLGV), 207–227 (GVAV…LCYI), 261–283 (VWST…WWWY), 298–318 (VALA…TIPT), 344–364 (ATVA…GTTV), 378–398 (VVLE…LANC), 419–439 (INFY…AFVW), and 447–467 (CYGL…VVYN).

The protein belongs to the multi antimicrobial extrusion (MATE) (TC 2.A.66.1) family.

It is found in the membrane. The protein is Protein DETOXIFICATION 55 of Arabidopsis thaliana (Mouse-ear cress).